A 342-amino-acid polypeptide reads, in one-letter code: Galactose mutarotase (342 aa).

Position 14 is a phosphoserine (S14). Beta-D-galactose-binding positions include 81 to 82 (NR) and H107. S124 carries the phosphoserine modification. H176 (proton donor) is an active-site residue. Beta-D-galactose is bound by residues 176 to 178 (HSY), D243, Q279, and E307. E307 acts as the Proton acceptor in catalysis.

Belongs to the aldose epimerase family. In terms of assembly, monomer.

The protein localises to the cytoplasm. The enzyme catalyses alpha-D-galactose = beta-D-galactose. It carries out the reaction alpha-D-glucose = beta-D-glucose. It participates in carbohydrate metabolism; hexose metabolism. The protein operates within carbohydrate metabolism; galactose metabolism. Its function is as follows. Mutarotase that catalyzes the interconversion of beta-D-galactose and alpha-D-galactose during galactose metabolism. Beta-D-galactose is metabolized in the liver into glucose 1-phosphate, the primary metabolic fuel, by the action of four enzymes that constitute the Leloir pathway: GALM, GALK1 (galactokinase), GALT (galactose-1-phosphate uridylyltransferase) and GALE (UDP-galactose-4'-epimerase). Involved in the maintenance of the equilibrium between the beta- and alpha-anomers of galactose, therefore ensuring a sufficient supply of the alpha-anomer for GALK1. Also active on D-glucose although shows a preference for galactose over glucose. This Rattus norvegicus (Rat) protein is Galactose mutarotase (Galm).